The following is a 449-amino-acid chain: Phosphoglucosamine mutase (449 aa).

S104 (phosphoserine intermediate) is an active-site residue. S104, D243, D245, and D247 together coordinate Mg(2+). At S104 the chain carries Phosphoserine.

Belongs to the phosphohexose mutase family. Requires Mg(2+) as cofactor. Post-translationally, activated by phosphorylation.

It catalyses the reaction alpha-D-glucosamine 1-phosphate = D-glucosamine 6-phosphate. Functionally, catalyzes the conversion of glucosamine-6-phosphate to glucosamine-1-phosphate. This chain is Phosphoglucosamine mutase, found in Xanthomonas axonopodis pv. citri (strain 306).